The following is a 923-amino-acid chain: Dynein axonemal intermediate chain 3 (923 aa).

The tract at residues 1 to 35 (MAPKPPKSPKGQKKGKKNMKQQLLVPEEEEPMNME) is disordered. Over residues 10 to 19 (KGQKKGKKNM) the composition is skewed to basic residues. WD repeat units lie at residues 398–438 (ESPD…DRIE), 480–536 (GHRK…PAVT), 702–741 (VHDG…GPLL), and 745–785 (CGPK…HEPA). A coiled-coil region spans residues 869–889 (LELVKKKAKIYQKTKEQMEAE).

In terms of assembly, interacts with ACTR2; this interaction reduces binding of the Arp2/3 complex to the VCA domain of nucleation promoting factors. Part of the multisubunit axonemal dynein complex formed at least of two heavy chains and a number of intermediate and light chains. Found in a associated with the catalytic heavy chain DNAH2, the intermediate chain DNAI4, and the light chain DYNLT1. In terms of tissue distribution, strongly expressed in the testes. Detected also in brain and lung tissues.

It is found in the cytoplasm. Acts as a negative regulator of cell migration, invasion, and metastasis downstream of p53/TP53, through inhibition of Arp2/3 complex-mediated actin polymerization. Via its association with the multisubunit axonemal dynein complex, is potentially involved in the regulation of cilia function. May play a role in osteogenesis of dental tissue-derived mesenchymal stem cells. The polypeptide is Dynein axonemal intermediate chain 3 (Dnai3) (Mus musculus (Mouse)).